The chain runs to 343 residues: Flavone 3'-O-methyltransferase OMT1 (343 aa).

N107 provides a ligand contact to (E)-ferulate. G184, D207, D227, M228, M240, and K241 together coordinate S-adenosyl-L-homocysteine. Catalysis depends on H245, which acts as the Proton acceptor. D246 provides a ligand contact to (E)-5-hydroxyferulate. Active-site residues include E273 and E305.

It belongs to the class I-like SAM-binding methyltransferase superfamily. Cation-independent O-methyltransferase family. COMT subfamily. Homodimer.

It carries out the reaction (E)-5-hydroxyferulate + S-adenosyl-L-methionine = (E)-sinapate + S-adenosyl-L-homocysteine + H(+). The enzyme catalyses luteolin + S-adenosyl-L-methionine = chrysoeriol + S-adenosyl-L-homocysteine + H(+). The catalysed reaction is quercetin + S-adenosyl-L-methionine = isorhamnetin + S-adenosyl-L-homocysteine + H(+). It catalyses the reaction (E)-caffeate + S-adenosyl-L-methionine = (E)-ferulate + S-adenosyl-L-homocysteine + H(+). It carries out the reaction a 3'-hydroxyflavone + S-adenosyl-L-methionine = a 3'-methoxyflavone + S-adenosyl-L-homocysteine + H(+). It functions in the pathway flavonoid metabolism. Functionally, catalyzes the 3'-O-methylation of the flavonoids luteolin and quercetin. Catalyzes the 3- of 5-O-methylation of the phenylpropanoids caffeate and 5-hydroxyferulate. Substrate preference is 5-hydroxyferulate &gt; luteolin &gt; quercetin &gt; caffeate. Apigenin, kempferol and 3,4-dimethylquercetin do not seem to be substrates for methylation. This chain is Flavone 3'-O-methyltransferase OMT1, found in Chrysosplenium americanum (American golden saxifrage).